The primary structure comprises 310 residues: MTDPRHPPVIFLMGPTASGKTALAIELVKRLPCDIISVDSALIYRGMDIGTAKPTAEELAQAPHRLLDIRDPFQTYSAADFRQDALREIETIVAQGRIPLLVGGTMLYYKALLEGLSPLPAADPLIRQAIEAEASLSGWEALHAQLQSIDPVAAARIHPNDPQRLSRALEVYRISGQTLTELTQTKGEQLPYRTLQFAIAPTDRELLRQRIAERFHLMLSQGFEQEVRALYDRGDLNADLPSIRCVGYRQMWEYLDGQISYDEMVYRGIVATCQLAKRQMTWLRSWQNVTWLETGAINNADIICHSLTSA.

Residue 14–21 (GPTASGKT) participates in ATP binding. Residue 16–21 (TASGKT) participates in substrate binding. Interaction with substrate tRNA regions lie at residues 39 to 42 (DSAL), 163 to 167 (QRLSR), and 244 to 249 (RCVGYR).

It belongs to the IPP transferase family. As to quaternary structure, monomer. Requires Mg(2+) as cofactor.

The enzyme catalyses adenosine(37) in tRNA + dimethylallyl diphosphate = N(6)-dimethylallyladenosine(37) in tRNA + diphosphate. Its function is as follows. Catalyzes the transfer of a dimethylallyl group onto the adenine at position 37 in tRNAs that read codons beginning with uridine, leading to the formation of N6-(dimethylallyl)adenosine (i(6)A). This chain is tRNA dimethylallyltransferase, found in Tolumonas auensis (strain DSM 9187 / NBRC 110442 / TA 4).